The following is a 349-amino-acid chain: MTALFEPTEHPHRRYNPLIDQWVLVSPHRAKRPWQGQQEKVNEEQKPSYDPTCYLCPSNKRITGELNPDYRKPYVFKNDFSALLEDTPAPEKSSDPLFQSSQARGESRVICFSPDHSKTLPLLTALEIEEVIKVWQEQLRELGAKYQWVQIFENKGAAMGCSNPHPHGQIWANSFLPNEVAREDRTQRDYLLKHGSVMLVDYVKRELALKERIVVETEHWIALVPYWAIWPFETLLLPKTHVKRLTELSDEQSKDLAVILKKLTTKYDNLFETSFPYSMGFHAAPFNGEDNEHWQLHAHFYPPLLRSATVRKFMVGYEMLGENQRDLTAEQAAERLRALSEVHYKERTK.

29–32 contacts UDP-alpha-D-glucose; that stretch reads RAKR. 2 residues coordinate Zn(2+): cysteine 53 and cysteine 56. 78–79 lines the UDP-alpha-D-glucose pocket; that stretch reads ND. Zn(2+) is bound at residue histidine 116. Residues asparagine 154 and 160–162 each bind UDP-alpha-D-glucose; that span reads GCS. Histidine 165 is a binding site for Zn(2+). Catalysis depends on histidine 167, which acts as the Tele-UMP-histidine intermediate. Glutamine 169 is a binding site for UDP-alpha-D-glucose. The Fe cation site is built by glutamate 183, histidine 282, histidine 297, and histidine 299. UDP-alpha-D-glucose is bound by residues 312–313, 317–318, and glutamine 324; these read KF and YE.

The protein belongs to the galactose-1-phosphate uridylyltransferase type 1 family. The cofactor is Zn(2+).

The catalysed reaction is alpha-D-galactose 1-phosphate + UDP-alpha-D-glucose = alpha-D-glucose 1-phosphate + UDP-alpha-D-galactose. It participates in carbohydrate metabolism; galactose metabolism. In Haemophilus influenzae (strain ATCC 51907 / DSM 11121 / KW20 / Rd), this protein is Galactose-1-phosphate uridylyltransferase (galT).